We begin with the raw amino-acid sequence, 458 residues long: MSKDKLWGGRFTQPTDKFVEEFTASINFDKRLYHQDIRGSIAHATMLGKQGIIPVADVESIVSGLKTILEQIEAGEFDFSVSLEDIHMNIEARLSEKIGDAGKRLHTGRSRNDQVALDIRLYLRDELVEVSAYIDLLIDAIIHQAEENLGVIMPGFTHLQTAQPILFSHHMMAYHEMLKRDKARMEDCLKRTNVLPLGAGALAGTTFPIDREYVAELLDFDGVTRNSLDSVSDRDFAMEFCAASSILMVHLSRFSEELILWSTSEFKFVELSDSFCTGSSIMPQKKNPDVPELVRGKTGRVNGNLVALLTLMKSLPLAYNKDMQEDKEPLFDTIDTVKGCLKVFADMVREMKINPERMKTAAAAGFSTATDVADYLVRKGIPFRDAHEIVGKTVRYCIENEMDIPELSLAEWQLFSGRIEEDIFESITLQASVNARRATGGTALERVRAEIARAKEGR.

It belongs to the lyase 1 family. Argininosuccinate lyase subfamily.

The protein localises to the cytoplasm. The enzyme catalyses 2-(N(omega)-L-arginino)succinate = fumarate + L-arginine. It functions in the pathway amino-acid biosynthesis; L-arginine biosynthesis; L-arginine from L-ornithine and carbamoyl phosphate: step 3/3. The chain is Argininosuccinate lyase from Citrifermentans bemidjiense (strain ATCC BAA-1014 / DSM 16622 / JCM 12645 / Bem) (Geobacter bemidjiensis).